The chain runs to 84 residues: Extender of the chronological lifespan protein 2 (84 aa).

The protein belongs to the ecl1 family.

It localises to the nucleus. Functionally, involved in chronological cell aging. This Schizosaccharomyces pombe (strain 972 / ATCC 24843) (Fission yeast) protein is Extender of the chronological lifespan protein 2 (ecl2).